Reading from the N-terminus, the 492-residue chain is GDP-Man:Man(3)GlcNAc(2)-PP-Dol alpha-1,2-mannosyltransferase (492 aa).

Residues 1–19 lie on the Lumenal side of the membrane; that stretch reads MAAGERSWCLCKLLRFFYS. Residues 20–40 traverse the membrane as a helical segment; it reads LFFPGLIVCGTLCVCLVIVLW. Residues 41 to 233 lie on the Cytoplasmic side of the membrane; sequence GIRLLLQRKK…TRNPFLSKVK (193 aa). Positions 234-254 form an intramembrane region, helical; that stretch reads LIYYYLFAFIYGLVGSCSDVV. Topologically, residues 255–399 are cytoplasmic; that stretch reads MVNSSWTLNH…IGLHTMWNEH (145 aa). An intramembrane region (helical) is located at residues 400–420; that stretch reads FGIGVVECMAAGTIILAHNSG. Residues 421–492 lie on the Cytoplasmic side of the membrane; it reads GPKLDIVVPH…FLSSVEKLFK (72 aa).

This sequence belongs to the glycosyltransferase group 1 family. Glycosyltransferase 4 subfamily.

It is found in the endoplasmic reticulum membrane. It catalyses the reaction an alpha-D-Man-(1-&gt;3)-[alpha-D-Man-(1-&gt;6)]-beta-D-Man-(1-&gt;4)-beta-D-GlcNAc-(1-&gt;4)-alpha-D-GlcNAc-diphospho-di-trans,poly-cis-dolichol + 2 GDP-alpha-D-mannose = an alpha-D-Man-(1-&gt;2)-alpha-D-Man-(1-&gt;2)-alpha-D-Man-(1-&gt;3)-[alpha-D-Man-(1-&gt;6)]-beta-D-Man-(1-&gt;4)-beta-D-GlcNAc-(1-&gt;4)-alpha-D-GlcNAc-diphospho-di-trans,poly-cis-dolichol + 2 GDP + 2 H(+). The protein operates within protein modification; protein glycosylation. GDP-Man:Man(3)GlcNAc(2)-PP-Dol alpha-1,2-mannosyltransferase that operates in the biosynthetic pathway of dolichol-linked oligosaccharides, the glycan precursors employed in protein asparagine (N)-glycosylation. The assembly of dolichol-linked oligosaccharides begins on the cytosolic side of the endoplasmic reticulum membrane and finishes in its lumen. The sequential addition of sugars to dolichol pyrophosphate produces dolichol-linked oligosaccharides containing fourteen sugars, including two GlcNAcs, nine mannoses and three glucoses. Once assembled, the oligosaccharide is transferred from the lipid to nascent proteins by oligosaccharyltransferases. Catalyzes, on the cytoplasmic face of the endoplasmic reticulum, the addition of the fourth and fifth mannose residues to the dolichol-linked oligosaccharide chain, to produce Man(5)GlcNAc(2)-PP-dolichol core oligosaccharide. Man(5)GlcNAc(2)-PP-dolichol is a substrate for ALG3, the following enzyme in the biosynthetic pathway. In Homo sapiens (Human), this protein is GDP-Man:Man(3)GlcNAc(2)-PP-Dol alpha-1,2-mannosyltransferase.